A 387-amino-acid polypeptide reads, in one-letter code: Exodeoxyribonuclease 7 large subunit (387 aa).

Belongs to the XseA family. Heterooligomer composed of large and small subunits.

It is found in the cytoplasm. The enzyme catalyses Exonucleolytic cleavage in either 5'- to 3'- or 3'- to 5'-direction to yield nucleoside 5'-phosphates.. In terms of biological role, bidirectionally degrades single-stranded DNA into large acid-insoluble oligonucleotides, which are then degraded further into small acid-soluble oligonucleotides. This Campylobacter fetus subsp. fetus (strain 82-40) protein is Exodeoxyribonuclease 7 large subunit.